The chain runs to 132 residues: UPF0299 membrane protein CKO_00648 (132 aa).

Helical transmembrane passes span 7-27 (IIWQYLRAFVLIYACLYAGIF), 31-51 (LLPITIPGSIIGMLILFVLLA), 63-83 (GCYVLIRYMALLFVPIGVGVM), and 93-113 (FGPVVVSCAISTLVVFLVVSW).

The protein belongs to the UPF0299 family.

It is found in the cell inner membrane. The chain is UPF0299 membrane protein CKO_00648 from Citrobacter koseri (strain ATCC BAA-895 / CDC 4225-83 / SGSC4696).